A 644-amino-acid chain; its full sequence is Exoribonuclease 2 (644 aa).

The RNB domain occupies 189–516 (REDLTALDFV…NHRLLKAVIK (328 aa)). The region spanning 561–643 (DTRFAAEIVD…ETRSIIARPV (83 aa)) is the S1 motif domain.

This sequence belongs to the RNR ribonuclease family. RNase II subfamily.

The protein localises to the cytoplasm. It carries out the reaction Exonucleolytic cleavage in the 3'- to 5'-direction to yield nucleoside 5'-phosphates.. Involved in mRNA degradation. Hydrolyzes single-stranded polyribonucleotides processively in the 3' to 5' direction. The chain is Exoribonuclease 2 from Escherichia coli (strain ATCC 8739 / DSM 1576 / NBRC 3972 / NCIMB 8545 / WDCM 00012 / Crooks).